The primary structure comprises 140 residues: UPF0306 protein YhbP (140 aa).

Belongs to the UPF0306 family.

The chain is UPF0306 protein YhbP from Escherichia coli O6:H1 (strain CFT073 / ATCC 700928 / UPEC).